Here is a 60-residue protein sequence, read N- to C-terminus: Large ribosomal subunit protein bL32 (60 aa).

It belongs to the bacterial ribosomal protein bL32 family.

In Clostridium novyi (strain NT), this protein is Large ribosomal subunit protein bL32.